The sequence spans 314 residues: Methionyl-tRNA formyltransferase (314 aa).

112-115 (SLLP) lines the (6S)-5,6,7,8-tetrahydrofolate pocket.

It belongs to the Fmt family.

It carries out the reaction L-methionyl-tRNA(fMet) + (6R)-10-formyltetrahydrofolate = N-formyl-L-methionyl-tRNA(fMet) + (6S)-5,6,7,8-tetrahydrofolate + H(+). Its function is as follows. Attaches a formyl group to the free amino group of methionyl-tRNA(fMet). The formyl group appears to play a dual role in the initiator identity of N-formylmethionyl-tRNA by promoting its recognition by IF2 and preventing the misappropriation of this tRNA by the elongation apparatus. This is Methionyl-tRNA formyltransferase from Aeromonas hydrophila subsp. hydrophila (strain ATCC 7966 / DSM 30187 / BCRC 13018 / CCUG 14551 / JCM 1027 / KCTC 2358 / NCIMB 9240 / NCTC 8049).